The sequence spans 273 residues: Pantothenate synthetase (273 aa).

An ATP-binding site is contributed by 27-34 (MGALHAGH). Histidine 34 acts as the Proton donor in catalysis. Glutamine 58 provides a ligand contact to (R)-pantoate. Residue glutamine 58 participates in beta-alanine binding. 144 to 147 (GKKD) serves as a coordination point for ATP. Glutamine 150 serves as a coordination point for (R)-pantoate. ATP contacts are provided by residues valine 173 and 181-184 (LSSR).

Belongs to the pantothenate synthetase family. As to quaternary structure, homodimer.

It localises to the cytoplasm. It carries out the reaction (R)-pantoate + beta-alanine + ATP = (R)-pantothenate + AMP + diphosphate + H(+). It participates in cofactor biosynthesis; (R)-pantothenate biosynthesis; (R)-pantothenate from (R)-pantoate and beta-alanine: step 1/1. Catalyzes the condensation of pantoate with beta-alanine in an ATP-dependent reaction via a pantoyl-adenylate intermediate. In Campylobacter hominis (strain ATCC BAA-381 / DSM 21671 / CCUG 45161 / LMG 19568 / NCTC 13146 / CH001A), this protein is Pantothenate synthetase.